Here is a 240-residue protein sequence, read N- to C-terminus: Uridylate kinase (240 aa).

ATP is bound at residue 13–16; that stretch reads KASG. The interval 21-26 is involved in allosteric activation by GTP; sequence GSQGFG. A UMP-binding site is contributed by glycine 55. Glycine 56 and arginine 60 together coordinate ATP. Residues aspartate 75 and 136-143 contribute to the UMP site; that span reads TGNPFFTT. Residues threonine 163, glutamine 164, tyrosine 169, and aspartate 172 each contribute to the ATP site.

The protein belongs to the UMP kinase family. In terms of assembly, homohexamer.

It localises to the cytoplasm. It catalyses the reaction UMP + ATP = UDP + ADP. It functions in the pathway pyrimidine metabolism; CTP biosynthesis via de novo pathway; UDP from UMP (UMPK route): step 1/1. Allosterically activated by GTP. Inhibited by UTP. Its function is as follows. Catalyzes the reversible phosphorylation of UMP to UDP. This Brucella suis biovar 1 (strain 1330) protein is Uridylate kinase.